A 166-amino-acid polypeptide reads, in one-letter code: Large ribosomal subunit protein uL10 (166 aa).

Belongs to the universal ribosomal protein uL10 family. As to quaternary structure, part of the ribosomal stalk of the 50S ribosomal subunit. The N-terminus interacts with L11 and the large rRNA to form the base of the stalk. The C-terminus forms an elongated spine to which L12 dimers bind in a sequential fashion forming a multimeric L10(L12)X complex.

Functionally, forms part of the ribosomal stalk, playing a central role in the interaction of the ribosome with GTP-bound translation factors. The chain is Large ribosomal subunit protein uL10 from Pseudomonas entomophila (strain L48).